The sequence spans 114 residues: T cell receptor beta variable 6-6 (114 aa).

An N-terminal signal peptide occupies residues 1–21 (MSISLLCCAAFPLLWAGPVNA). An Ig-like domain is found at 22-114 (GVTQTPKFRI…TSVYFCASSY (93 aa)). A disulfide bond links cysteine 42 and cysteine 110. An N-linked (GlcNAc...) asparagine glycan is attached at asparagine 84.

As to quaternary structure, alpha-beta TR is a heterodimer composed of an alpha and beta chain; disulfide-linked. The alpha-beta TR is associated with the transmembrane signaling CD3 coreceptor proteins to form the TR-CD3 (TcR or TCR). The assembly of alpha-beta TR heterodimers with CD3 occurs in the endoplasmic reticulum where a single alpha-beta TR heterodimer associates with one CD3D-CD3E heterodimer, one CD3G-CD3E heterodimer and one CD247 homodimer forming a stable octameric structure. CD3D-CD3E and CD3G-CD3E heterodimers preferentially associate with TR alpha and TR beta chains, respectively. The association of the CD247 homodimer is the last step of TcR assembly in the endoplasmic reticulum and is required for transport to the cell surface.

The protein resides in the cell membrane. Its function is as follows. V region of the variable domain of T cell receptor (TR) beta chain that participates in the antigen recognition. Alpha-beta T cell receptors are antigen specific receptors which are essential to the immune response and are present on the cell surface of T lymphocytes. Recognize peptide-major histocompatibility (MH) (pMH) complexes that are displayed by antigen presenting cells (APC), a prerequisite for efficient T cell adaptive immunity against pathogens. Binding of alpha-beta TR to pMH complex initiates TR-CD3 clustering on the cell surface and intracellular activation of LCK that phosphorylates the ITAM motifs of CD3G, CD3D, CD3E and CD247 enabling the recruitment of ZAP70. In turn ZAP70 phosphorylates LAT, which recruits numerous signaling molecules to form the LAT signalosome. The LAT signalosome propagates signal branching to three major signaling pathways, the calcium, the mitogen-activated protein kinase (MAPK) kinase and the nuclear factor NF-kappa-B (NF-kB) pathways, leading to the mobilization of transcription factors that are critical for gene expression and essential for T cell growth and differentiation. The T cell repertoire is generated in the thymus, by V-(D)-J rearrangement. This repertoire is then shaped by intrathymic selection events to generate a peripheral T cell pool of self-MH restricted, non-autoaggressive T cells. Post-thymic interaction of alpha-beta TR with the pMH complexes shapes TR structural and functional avidity. The chain is T cell receptor beta variable 6-6 from Homo sapiens (Human).